The chain runs to 291 residues: DNA N6-methyl adenine demethylase (291 aa).

Residues 85-256 form the Fe2OG dioxygenase domain; sequence GLTLIHNFLS…RGRRIALTMR (172 aa). 171–173 is a binding site for 2-oxoglutarate; it reads LEY. Fe cation contacts are provided by His184, Asp186, and His239.

The protein belongs to the alkB family. As to quaternary structure, interacts with top-2; the interaction is required for localization of top-2 to DNA. Also interacts with mtss-1, his-24, ule-3, C18B2.3, pgl-1, ceh-93, mcm-4 and F37C4.5. Requires Fe(2+) as cofactor.

It is found in the nucleus. The catalysed reaction is an N(6)-methyl-2'-deoxyadenosine in DNA + 2-oxoglutarate + O2 = a 2'-deoxyadenosine in DNA + formaldehyde + succinate + CO2. In terms of biological role, dioxygenase that specifically demethylates DNA methylated on the 6th position of adenine (N(6)-methyladenosine) DNA. N(6)-methyladenosine (m6A) DNA is involved in epigenetic transgenerational inheritance. Plays an essential role in DNA replication and repair in the germline during meiosis. Binds to components of the DNA replication machinery such as top-2, and directs their localization to DNA to control DNA replication. In Caenorhabditis elegans, this protein is DNA N6-methyl adenine demethylase.